Here is a 422-residue protein sequence, read N- to C-terminus: Structural polyprotein (422 aa).

At 1–359 (SVTEHFNVYK…WPHEIIQYYY (359 aa)) the chain is on the extracellular side. N-linked (GlcNAc...) asparagine; by host glycans are attached at residues asparagine 200 and asparagine 262. The chain crosses the membrane as a helical span at residues 360–382 (GLYPAATIAAVSGXSLMALLTLA). Residues 383 to 422 (ATCCMLATARRKCLTPYALTPGAVVPLTLGLXXCAPRANA) are Cytoplasmic-facing. S-palmitoyl cysteine; by host attachment occurs at residues cysteine 385, cysteine 395, and cysteine 416. The transient transmembrane before p62-6K protein processing stretch occupies residues 395 to 415 (CLTPYALTPGAVVPLTLGLXX).

Spike glycoprotein E2: Processing of the precursor of protein E3/E2 into E2 and E3 results in a heterodimer of the spike glycoproteins E2 and E1. Spike glycoprotein E2: Spike at virion surface are constituted of three E2-E1 heterodimers. Spike glycoprotein E2: Interacts with 6K protein. In terms of processing, structural polyprotein: Specific enzymatic cleavages in vivo yield mature proteins. Capsid protein is auto-cleaved during polyprotein translation, unmasking a signal peptide at the N-terminus of the precursor of E3/E2. The remaining polyprotein is then targeted to the host endoplasmic reticulum, where host signal peptidase cleaves it into pE2, 6K and E1 proteins. pE2 is further processed to mature E3 and E2 by host furin in trans-Golgi vesicle. Spike glycoprotein E2: Palmitoylated via thioester bonds. These palmitoylations may induce disruption of the C-terminus transmembrane. This would result in the reorientation of E2 C-terminus from lumenal to cytoplasmic side. Post-translationally, spike glycoprotein E2: N-glycosylated.

It is found in the virion membrane. The protein resides in the host cell membrane. Functionally, spike glycoprotein E2: Plays a role in viral attachment to target host cell, by binding to the cell receptor. Synthesized as a p62 precursor which is processed by furin at the cell membrane just before virion budding, giving rise to E2-E1 heterodimer. The p62-E1 heterodimer is stable, whereas E2-E1 is unstable and dissociate at low pH. p62 is processed at the last step, presumably to avoid E1 fusion activation before its final export to cell surface. E2 C-terminus contains a transitory transmembrane that would be disrupted by palmitoylation, resulting in reorientation of the C-terminal tail from lumenal to cytoplasmic side. This step is critical since E2 C-terminus is involved in budding by interacting with capsid proteins. This release of E2 C-terminus in cytoplasm occurs lately in protein export, and precludes premature assembly of particles at the endoplasmic reticulum membrane. This is Structural polyprotein from Ross river virus (strain 213970) (RRV).